The following is a 151-amino-acid chain: Large ribosomal subunit protein bL9 (151 aa).

It belongs to the bacterial ribosomal protein bL9 family.

Binds to the 23S rRNA. This Thermosipho melanesiensis (strain DSM 12029 / CIP 104789 / BI429) protein is Large ribosomal subunit protein bL9.